Consider the following 325-residue polypeptide: GMP reductase (325 aa).

The Thioimidate intermediate role is filled by cysteine 173. 202-225 (IIADGGIRHHGDIAKSVRFGAAMV) lines the NADP(+) pocket.

This sequence belongs to the IMPDH/GMPR family. GuaC type 2 subfamily.

It carries out the reaction IMP + NH4(+) + NADP(+) = GMP + NADPH + 2 H(+). Catalyzes the irreversible NADPH-dependent deamination of GMP to IMP. It functions in the conversion of nucleobase, nucleoside and nucleotide derivatives of G to A nucleotides, and in maintaining the intracellular balance of A and G nucleotides. The protein is GMP reductase of Leptothrix cholodnii (strain ATCC 51168 / LMG 8142 / SP-6) (Leptothrix discophora (strain SP-6)).